The chain runs to 217 residues: Peroxiredoxin Q, chloroplastic (217 aa).

Residues Met1 to Ser65 constitute a chloroplast transit peptide. The 148-residue stretch at Val70–Ala217 folds into the Thioredoxin domain. Cys112 (cysteine sulfenic acid (-SOH) intermediate) is an active-site residue. A disulfide bond links Cys112 and Cys117.

The protein belongs to the peroxiredoxin family. BCP/PrxQ subfamily. As to quaternary structure, monomer. As to expression, expressed in the leaves, roots and stems.

It localises to the plastid. The protein resides in the chloroplast thylakoid lumen. The enzyme catalyses a hydroperoxide + [thioredoxin]-dithiol = an alcohol + [thioredoxin]-disulfide + H2O. In terms of biological role, thiol-specific peroxidase that catalyzes the reduction of hydrogen peroxide and organic hydroperoxides to water and alcohols, respectively. Plays a role in cell protection against oxidative stress by detoxifying peroxides. Involved in both resistance against fungal disease and oxidative stress. The protein is Peroxiredoxin Q, chloroplastic (AFP1) of Gentiana triflora (Clustered gentian).